The sequence spans 1244 residues: Superkiller complex protein 2 (1244 aa).

The tract at residues 218–249 is disordered; sequence LDLSGGDEDEGEAAGGPRGDNASPSPSGTPLV. Phosphoserine occurs at positions 242 and 253. In terms of domain architecture, Helicase ATP-binding spans 316-472; it reads ILHLEQHDSV…WIGRLKRRQI (157 aa). 329-336 is a binding site for ATP; that stretch reads AHTSAGKT. Residues 420–423 carry the DEVH box motif; that stretch reads DEVH. The region spanning 582–752 is the Helicase C-terminal domain; the sequence is GLTSLDLTTS…LTYTMILNLL (171 aa).

It belongs to the helicase family. SKI2 subfamily. Component of the SKI complex which consists of SKIC2, SKIC3 and SKIC8. Interacts with HBS1L isoform 2.

Its subcellular location is the nucleus. The protein resides in the cytoplasm. It catalyses the reaction ATP + H2O = ADP + phosphate + H(+). Functionally, helicase component of the SKI complex, a multiprotein complex that assists the RNA-degrading exosome during the mRNA decay and quality-control pathways. The SKI complex catalyzes mRNA extraction from 80S ribosomal complexes in the 3'-5' direction and channels mRNA to the cytosolic exosome for degradation. SKI-mediated extraction of mRNA from stalled ribosomes allow binding of the Pelota-HBS1L complex and subsequent ribosome disassembly by ABCE1 for ribosome recycling. In the nucleus, the SKI complex associates with transcriptionally active genes in a manner dependent on PAF1 complex (PAF1C). This chain is Superkiller complex protein 2, found in Mus musculus (Mouse).